A 101-amino-acid polypeptide reads, in one-letter code: Small ribosomal subunit protein uS14 (101 aa).

It belongs to the universal ribosomal protein uS14 family. As to quaternary structure, part of the 30S ribosomal subunit. Contacts proteins S3 and S10.

Functionally, binds 16S rRNA, required for the assembly of 30S particles and may also be responsible for determining the conformation of the 16S rRNA at the A site. The sequence is that of Small ribosomal subunit protein uS14 from Idiomarina loihiensis (strain ATCC BAA-735 / DSM 15497 / L2-TR).